The primary structure comprises 926 residues: Alpha-aminoadipic semialdehyde synthase, mitochondrial (926 aa).

The N-terminal 27 residues, 1–27 (MLQVHRTGLGRLGVSLSKGLHHKAVLA), are a transit peptide targeting the mitochondrion. The tract at residues 28–476 (VRREDVNAWE…ESRERAQSLS (449 aa)) is lysine-ketoglutarate reductase. N6-acetyllysine is present on residues K48 and K56. At K93 the chain carries N6-acetyllysine; alternate. Residue K93 is modified to N6-succinyllysine; alternate. N6-acetyllysine is present on K128. Residue K138 is modified to N6-acetyllysine; alternate. K138 carries the post-translational modification N6-succinyllysine; alternate. An N6-succinyllysine modification is found at K274. An N6-acetyllysine; alternate modification is found at K286. Residue K286 is modified to N6-succinyllysine; alternate. The residue at position 333 (K333) is an N6-succinyllysine. K458 bears the N6-acetyllysine; alternate mark. An N6-succinyllysine; alternate modification is found at K458. Residues 477–926 (MGTRRKVLVL…IYTTQSTIKP (450 aa)) form a saccharopine dehydrogenase region. 3 residues coordinate NAD(+): S488, D512, and Q516. An N6-acetyllysine; alternate modification is found at K523. K523 is modified (N6-succinyllysine; alternate). Position 533 (I533) interacts with NAD(+). An N6-acetyllysine; alternate modification is found at K535. Position 535 is an N6-succinyllysine; alternate (K535). The NAD(+) site is built by L554, A576, and S577. Residue 577–578 (SY) coordinates L-saccharopine. At K584 the chain carries N6-acetyllysine; alternate. K584 is modified (N6-succinyllysine; alternate). Residues L603, D604, and P605 each contribute to the NAD(+) site. Residue D604 coordinates L-saccharopine. Residue R703 participates in L-saccharopine binding. K707 is modified (N6-acetyllysine). 724-726 (TLR) lines the L-saccharopine pocket. K732 is modified (N6-succinyllysine). N6-acetyllysine is present on K739. Position 761 is an N6-acetyllysine; alternate (K761). An N6-succinyllysine; alternate modification is found at K761. At K780 the chain carries N6-acetyllysine.

It in the N-terminal section; belongs to the AlaDH/PNT family. This sequence in the C-terminal section; belongs to the saccharopine dehydrogenase family. Homotetramer. Expressed in all 16 tissues examined with highest expression in the liver.

Its subcellular location is the mitochondrion. The enzyme catalyses L-saccharopine + NADP(+) + H2O = L-lysine + 2-oxoglutarate + NADPH + H(+). It catalyses the reaction L-saccharopine + NAD(+) + H2O = (S)-2-amino-6-oxohexanoate + L-glutamate + NADH + H(+). It functions in the pathway amino-acid degradation; L-lysine degradation via saccharopine pathway; glutaryl-CoA from L-lysine: step 1/6. Its pathway is amino-acid degradation; L-lysine degradation via saccharopine pathway; glutaryl-CoA from L-lysine: step 2/6. Its function is as follows. Bifunctional enzyme that catalyzes the first two steps in lysine degradation. The sequence is that of Alpha-aminoadipic semialdehyde synthase, mitochondrial from Homo sapiens (Human).